A 114-amino-acid chain; its full sequence is Biofilm growth-associated repressor (114 aa).

One can recognise an HTH arsR-type domain in the interval 17-111 (DMEKRANEVA…ALYTIFCAQE (95 aa)). A DNA-binding region (H-T-H motif) is located at residues 51-74 (VGELEQQIGIGQPTLSQQLGVLRE).

In terms of biological role, represses an operon that comprises itself, XF_0764, XF_0765, XF_0766 and blh. Binds to a palindromic AT-rich sequence spanning the -10 region of the blh promoter and blocks transcription of the operon. This Xylella fastidiosa (strain 9a5c) protein is Biofilm growth-associated repressor (bigR).